Consider the following 972-residue polypeptide: Fibroblast growth factor receptor (972 aa).

The N-terminal stretch at 1–43 is a signal peptide; it reads MSLPRCPRTRTVMFSRTLTRCYPQRTLWIAILCVICSWTLSTA. Topologically, residues 44–547 are extracellular; the sequence is GATTIRDKEV…NNMQPTSKTQ (504 aa). The 96-residue stretch at 57–152 folds into the Fibronectin type-III domain; sequence APQDLTAIPV…YIEASGTPPI (96 aa). Residues Asn109, Asn121, Asn191, Asn203, Asn239, Asn272, Asn315, Asn390, Asn398, Asn419, Asn422, and Asn460 are each glycosylated (N-linked (GlcNAc...) asparagine). Residues 150–242 form the Ig-like C2-type 1 domain; it reads PPIPPTLRRN…GQPIHVNFTL (93 aa). The cysteines at positions 176 and 226 are disulfide-linked. Ig-like C2-type domains follow at residues 282 to 374 and 383 to 517; these read PRFT…YDVK and PIMS…AYLD. Cys306 and Cys358 form a disulfide bridge. Residues Cys403 and Cys501 are joined by a disulfide bond. The helical transmembrane segment at 548–568 threads the bilayer; it reads LIIFSVVGFVVVLILVTCIAI. The Cytoplasmic segment spans residues 569 to 972; it reads LCKQTQVRHR…QTRDCCPYAN (404 aa). One can recognise a Protein kinase domain in the interval 639–925; sequence LTVGKTIGEG…ISVSSNQDYL (287 aa). ATP-binding positions include 645-653 and Lys673; that span reads IGEGAFGKV. Asp781 functions as the Proton acceptor in the catalytic mechanism. Phosphotyrosine; by autocatalysis is present on Tyr812.

It belongs to the protein kinase superfamily. Tyr protein kinase family. Fibroblast growth factor receptor subfamily.

It is found in the membrane. It catalyses the reaction L-tyrosyl-[protein] + ATP = O-phospho-L-tyrosyl-[protein] + ADP + H(+). In terms of biological role, receptor for basic fibroblast growth factor. This Strongylocentrotus purpuratus (Purple sea urchin) protein is Fibroblast growth factor receptor (FGFR).